The sequence spans 156 residues: ATP synthase subunit b (156 aa).

The chain crosses the membrane as a helical span at residues 5 to 27; the sequence is ITLIGQMITFAIFVGFTMKFVWP.

Belongs to the ATPase B chain family. F-type ATPases have 2 components, F(1) - the catalytic core - and F(0) - the membrane proton channel. F(1) has five subunits: alpha(3), beta(3), gamma(1), delta(1), epsilon(1). F(0) has three main subunits: a(1), b(2) and c(10-14). The alpha and beta chains form an alternating ring which encloses part of the gamma chain. F(1) is attached to F(0) by a central stalk formed by the gamma and epsilon chains, while a peripheral stalk is formed by the delta and b chains.

Its subcellular location is the cell inner membrane. F(1)F(0) ATP synthase produces ATP from ADP in the presence of a proton or sodium gradient. F-type ATPases consist of two structural domains, F(1) containing the extramembraneous catalytic core and F(0) containing the membrane proton channel, linked together by a central stalk and a peripheral stalk. During catalysis, ATP synthesis in the catalytic domain of F(1) is coupled via a rotary mechanism of the central stalk subunits to proton translocation. In terms of biological role, component of the F(0) channel, it forms part of the peripheral stalk, linking F(1) to F(0). This is ATP synthase subunit b from Francisella philomiragia subsp. philomiragia (strain ATCC 25017 / CCUG 19701 / FSC 153 / O#319-036).